Here is a 386-residue protein sequence, read N- to C-terminus: AT-hook motif nuclear-localized protein 8 (386 aa).

Disordered stretches follow at residues 1-175 and 303-372; these read MDSR…LGGT and KQSS…LHPH. Positions 54–70 are enriched in low complexity; that stretch reads QQQSQTFHQQQQQQMDQ. Basic residues predominate over residues 101–110; it reads VKKKRGRPRK. Positions 102 to 110 match the Bipartite nuclear localization signal motif; it reads KKKRGRPRK. Residues 102 to 114 constitute a DNA-binding region (a.T hook 1); sequence KKKRGRPRKYTPD. A compositionally biased stretch (polar residues) spans 126–135; that stretch reads PLLSAASNSY. Residues 136 to 147 are compositionally biased toward gly residues; that stretch reads GEGGVGDSGGNG. The a.T hook 2 DNA-binding region spans 155–167; the sequence is KRNRGRPPGSSKK. The 143-residue stretch at 174-316 folds into the PPC domain; the sequence is GTSGVGFTPH…VNIARGQNPE (143 aa). 2 stretches are compositionally biased toward low complexity: residues 328-337 and 361-372; these read GSVSQGPSSE and QQQQQQQPLHPH.

Its subcellular location is the nucleus. In terms of biological role, transcription factor that specifically binds AT-rich DNA sequences related to the nuclear matrix attachment regions (MARs). This chain is AT-hook motif nuclear-localized protein 8, found in Arabidopsis thaliana (Mouse-ear cress).